Here is a 435-residue protein sequence, read N- to C-terminus: Type A flavoprotein fprA (435 aa).

A zinc metallo-hydrolase region spans residues 48–228; sequence ANGTTYNAYA…PFRSFVAQVL (181 aa). Residues H98, E100, D102, H167, D186, and H243 each contribute to the Fe cation site. One can recognise a Flavodoxin-like domain in the interval 276–415; that stretch reads LLIFYVSAYR…EGRAFGRRLA (140 aa).

This sequence in the N-terminal section; belongs to the zinc metallo-hydrolase group 3 family. In terms of assembly, homodimer. It depends on FMN as a cofactor. Requires Fe cation as cofactor.

In terms of biological role, low-potential electron donor to a number of redox enzymes. This Rhodobacter capsulatus (Rhodopseudomonas capsulata) protein is Type A flavoprotein fprA (fprA).